The sequence spans 379 residues: Cytochrome b (379 aa).

4 consecutive transmembrane segments (helical) span residues 33-53 (FGSL…FLAM), 77-98 (WLIR…FIHV), 113-133 (WNIG…GYVL), and 178-198 (FFAF…VHLL). Positions 83 and 97 each coordinate heme b. The heme b site is built by histidine 182 and histidine 196. A ubiquinone is bound at residue histidine 201. 4 helical membrane-spanning segments follow: residues 226–246 (TKDL…VLFF), 288–308 (LGGV…PLLN), 320–340 (VTQV…WIGG), and 347–367 (FTTI…ILIP).

Belongs to the cytochrome b family. In terms of assembly, the cytochrome bc1 complex contains 11 subunits: 3 respiratory subunits (MT-CYB, CYC1 and UQCRFS1), 2 core proteins (UQCRC1 and UQCRC2) and 6 low-molecular weight proteins (UQCRH/QCR6, UQCRB/QCR7, UQCRQ/QCR8, UQCR10/QCR9, UQCR11/QCR10 and a cleavage product of UQCRFS1). This cytochrome bc1 complex then forms a dimer. Heme b is required as a cofactor.

The protein resides in the mitochondrion inner membrane. In terms of biological role, component of the ubiquinol-cytochrome c reductase complex (complex III or cytochrome b-c1 complex) that is part of the mitochondrial respiratory chain. The b-c1 complex mediates electron transfer from ubiquinol to cytochrome c. Contributes to the generation of a proton gradient across the mitochondrial membrane that is then used for ATP synthesis. The chain is Cytochrome b (MT-CYB) from Akodon cursor (Cursor grass mouse).